The following is a 473-amino-acid chain: Adenosylhomocysteinase (473 aa).

The substrate site is built by Thr-60, Asp-135, and Glu-197. 198–200 (TTT) serves as a coordination point for NAD(+). 2 residues coordinate substrate: Lys-227 and Asp-231. NAD(+)-binding positions include Asn-232, 261-266 (GFGDVG), Glu-284, Asn-319, 340-342 (IGH), and Asn-385.

The protein belongs to the adenosylhomocysteinase family. NAD(+) serves as cofactor.

It is found in the cytoplasm. The catalysed reaction is S-adenosyl-L-homocysteine + H2O = L-homocysteine + adenosine. The protein operates within amino-acid biosynthesis; L-homocysteine biosynthesis; L-homocysteine from S-adenosyl-L-homocysteine: step 1/1. May play a key role in the regulation of the intracellular concentration of adenosylhomocysteine. The sequence is that of Adenosylhomocysteinase from Bradyrhizobium diazoefficiens (strain JCM 10833 / BCRC 13528 / IAM 13628 / NBRC 14792 / USDA 110).